A 330-amino-acid chain; its full sequence is Probable pectinesterase 55 (330 aa).

The first 24 residues, Met-1–Ala-24, serve as a signal peptide directing secretion. Residues Asn-38 and Asn-52 are each glycosylated (N-linked (GlcNAc...) asparagine). The Proton donor role is filled by Asp-161. Asp-182 functions as the Nucleophile in the catalytic mechanism. Residues Arg-243 and Trp-245 each contribute to the substrate site. Residues Asn-257 and Asn-292 are each glycosylated (N-linked (GlcNAc...) asparagine).

Belongs to the pectinesterase family.

It localises to the secreted. The protein resides in the cell wall. It carries out the reaction [(1-&gt;4)-alpha-D-galacturonosyl methyl ester](n) + n H2O = [(1-&gt;4)-alpha-D-galacturonosyl](n) + n methanol + n H(+). It functions in the pathway glycan metabolism; pectin degradation; 2-dehydro-3-deoxy-D-gluconate from pectin: step 1/5. Its function is as follows. Acts in the modification of cell walls via demethylesterification of cell wall pectin. The chain is Probable pectinesterase 55 (PME55) from Arabidopsis thaliana (Mouse-ear cress).